We begin with the raw amino-acid sequence, 105 residues long: Small ribosomal subunit protein uS17 (105 aa).

It belongs to the universal ribosomal protein uS17 family. As to quaternary structure, part of the 30S ribosomal subunit.

Its function is as follows. One of the primary rRNA binding proteins, it binds specifically to the 5'-end of 16S ribosomal RNA. The protein is Small ribosomal subunit protein uS17 of Thermus aquaticus.